A 433-amino-acid chain; its full sequence is Cysteine--tRNA ligase (433 aa).

Position 4 (cysteine 4) interacts with Zn(2+). Positions 6–16 match the 'HIGH' region motif; the sequence is PTVYDTAHIGN. Zn(2+) is bound by residues cysteine 188, histidine 213, and glutamate 217. The short motif at 246–250 is the 'KMSKS' region element; that stretch reads KMSKS. Lysine 249 provides a ligand contact to ATP.

This sequence belongs to the class-I aminoacyl-tRNA synthetase family. As to quaternary structure, monomer. It depends on Zn(2+) as a cofactor.

Its subcellular location is the cytoplasm. The catalysed reaction is tRNA(Cys) + L-cysteine + ATP = L-cysteinyl-tRNA(Cys) + AMP + diphosphate. The chain is Cysteine--tRNA ligase from Wolbachia sp. subsp. Brugia malayi (strain TRS).